Consider the following 751-residue polypeptide: uncharacterized protein (751 aa).

The interval 73–169 (FGVVHSHTPK…PVLIDDDTGE (97 aa)) is disordered. Positions 96–109 (ATSTRRSATAQRAA) are enriched in low complexity. Polar residues predominate over residues 111–120 (LKSSPVDQWS).

This is an uncharacterized protein from Invertebrate iridescent virus 3 (IIV-3).